The following is a 369-amino-acid chain: Trans-enoyl reductase pyiC (369 aa).

An NADP(+)-binding site is contributed by 52-55; sequence CDYK. 137 to 144 lines the substrate pocket; the sequence is TGIGTLGM. Residues 195–198, Y213, and 260–261 contribute to the NADP(+) site; these read SPKN and LE. 280–284 lines the substrate pocket; the sequence is GPLLL. 349–350 provides a ligand contact to NADP(+); the sequence is VS.

This sequence belongs to the zinc-containing alcohol dehydrogenase family. As to quaternary structure, monomer.

The protein operates within mycotoxin biosynthesis. In terms of biological role, trans-enoyl reductase; part of the gene cluster that mediates the biosynthesis of the mycotoxin pyrichalasin H, a tyrosine-derived cytochalasan that inhibits the growth of rice seedlings, but also inhibits lymphocyte capping and actin polymerization and alters cell morphology. Pyrichalasin H is indicated as the responsible agent for the genus-specific pathogenicity of M.grisea toward crabgrass. The first step in the pathway is catalyzed by the O-methyltransferase pyiA which methylates free tyrosine to generate the precursor O-methyltyrosine. The hybrid PKS-NRPS pyiS, assisted by the enoyl reductase pyiC, are responsible for fusion of the O-methyltyrosine precursor and the polyketide backbone. The polyketide synthase module (PKS) of pyiS is responsible for the synthesis of the polyketide backbone and the downstream nonribosomal peptide synthetase (NRPS) amidates the carboxyl end of the polyketide with the O-methyltyrosine precursor. As the NRPS A-domain demonstrates substrate tolerance, pyiS can also use phenylalanine, tyrosine and even para-chlorophenylalanine as amino acid precursor, which leads to the production of novel cytochalasans, including halogenated cytochalasans. Because pyiS lacks a designated enoylreductase (ER) domain, the required activity is provided the enoyl reductase pyiC. Reduction by the hydrolyase pyiE, followed by dehydration and intra-molecular Diels-Alder cyclization by the Diels-Alderase pyiF then yield the required isoindolone-fused macrocycle. The tailoring cytochrome P450 monooxygenases piyD and piyG catalyze the hydroxylation at C-18 and C-7, respectivily, whereas the short-chain dehydrogenase/reductase pyiH reduces the carbonyl at C-21 in preparation for the transfer of an acetyl group by the acetyltransferase pyiB. These 3 reactions whose order is not clear yet, lead to the production of O-methylpyrichalasin J, a deacetylated pyrichalasin H. Finally, pyiB to converts O-methylpyrichalasin J into the final product pyrichalasin H via acetylation of C-21. This Pyricularia grisea (Crabgrass-specific blast fungus) protein is Trans-enoyl reductase pyiC.